We begin with the raw amino-acid sequence, 210 residues long: Na(+)-translocating NADH-quinone reductase subunit D (210 aa).

A run of 6 helical transmembrane segments spans residues 10–30 (VLIG…GVCS), 42–62 (LVMT…ISLI), 72–92 (IIVQ…VLQA), 103–123 (VFVG…AYAM), 131–151 (FMDG…VGFV), and 178–198 (NGLL…IWII).

It belongs to the NqrDE/RnfAE family. Composed of six subunits; NqrA, NqrB, NqrC, NqrD, NqrE and NqrF.

The protein resides in the cell inner membrane. The enzyme catalyses a ubiquinone + n Na(+)(in) + NADH + H(+) = a ubiquinol + n Na(+)(out) + NAD(+). NQR complex catalyzes the reduction of ubiquinone-1 to ubiquinol by two successive reactions, coupled with the transport of Na(+) ions from the cytoplasm to the periplasm. NqrA to NqrE are probably involved in the second step, the conversion of ubisemiquinone to ubiquinol. The polypeptide is Na(+)-translocating NADH-quinone reductase subunit D (Shewanella pealeana (strain ATCC 700345 / ANG-SQ1)).